Reading from the N-terminus, the 607-residue chain is CRISPR-associated DNA-binding protein Cas12m (607 aa).

The interval 1–16 is wedge domain (WED-N); the sequence is MTRVTVQTAGVHYKWQ. The recognition domain (REC) stretch occupies residues 17–189; it reads MPDQLTQQLR…QLRHHRWDGT (173 aa). The interval 50 to 124 is roof in REC; that stretch reads WSSYPAVAAL…IASVRDEATE (75 aa). The segment covering 74 to 83 has biased composition (basic and acidic residues); it reads ASTVKEEKSR. The disordered stretch occupies residues 74 to 94; that stretch reads ASTVKEEKSRQRTKRPSHPAV. Residues 190–315 form a wedge domain (WED-C) region; sequence GTISVQLQRQ…KIPDQGEVDE (126 aa). Residues 316–559 are ruvC-I; that stretch reads GPTIAVHLGW…TVSHTGLSRV (244 aa). Residues 391 to 452 form a ruvC insertion region; it reads SIRDTLVAWL…EGADIAETLE (62 aa). Residues 552–588 are target nucleic-acid binding (TNB); the sequence is SHTGLSRVHAACGHENPADDRYLMQPVLCDGCGRTYD. Zn(2+) contacts are provided by His560, Cys563, Cys580, and Cys583. The tract at residues 589–607 is ruvC-II; sequence TDLSATILMLQRASAATSN. Asp590 contacts Mg(2+).

It belongs to the CRISPR-associated DNA-binding protein Cas12m family. Binds crRNA and target dsDNA as a monomer. The cofactor is Mg(2+). Zn(2+) is required as a cofactor.

CRISPR (clustered regularly interspaced short palindromic repeat), is an adaptive immune system that provides protection against mobile genetic elements (viruses, transposable elements and conjugative plasmids). CRISPR clusters contain sequences complementary to antecedent mobile elements and target invading nucleic acids. CRISPR clusters are transcribed and processed into CRISPR RNA (crRNA). Recognizes a short motif in the CRISPR repeat sequences (the 5' PAM or protospacer adjacent motif, 5'-TTN-3' in this organism) to help distinguish self versus nonself, as targets within the bacterial CRISPR locus do not have PAMs. Upon expression in E.coli as a CRISPR locus inhibits plasmid propagation when targeted to regions essential for plasmid propagation (replication origin and a selectable marker); inhibits expression of a non-selectable marker, probably at the transcriptional level. Protects E.coli against bacteriophage M13mp18, to a lesser extent against lambda and VpaE1 as well as phage T4 with hydroxymethyl or unmodified (but not glycosylated) cytosines. Preferentially binds to its associated crRNA. Cas12m-crRNA binds DNA in a PAM-dependent, crRNA-guided fashion. Binds a 20-bp crRNA-ss-target DNA heteroduplex, in a 52 nucleotide crRNA. No dsDNA, ssDNA or RNA nuclease activity is seen for the crRNA-Cas12m complex. Probably required for pre-crRNA processing to mature crRNA. The chain is CRISPR-associated DNA-binding protein Cas12m from Gordonia otitidis (strain DSM 44809 / CCUG 52243 / JCM 12355 / NBRC 100426 / IFM 10032).